The chain runs to 78 residues: UPF0335 protein RrIowa_0193 (78 aa).

This sequence belongs to the UPF0335 family.

This Rickettsia rickettsii (strain Iowa) protein is UPF0335 protein RrIowa_0193.